The chain runs to 96 residues: Large ribosomal subunit protein bL28 (96 aa).

This sequence belongs to the bacterial ribosomal protein bL28 family.

The polypeptide is Large ribosomal subunit protein bL28 (Leptospira biflexa serovar Patoc (strain Patoc 1 / Ames)).